The chain runs to 228 residues: Ribosomal RNA small subunit methyltransferase G (228 aa).

Residues Gly89, Leu94, Val140–Glu141, and Arg159 contribute to the S-adenosyl-L-methionine site.

Belongs to the methyltransferase superfamily. RNA methyltransferase RsmG family.

It is found in the cytoplasm. The catalysed reaction is guanosine(527) in 16S rRNA + S-adenosyl-L-methionine = N(7)-methylguanosine(527) in 16S rRNA + S-adenosyl-L-homocysteine. In terms of biological role, specifically methylates the N7 position of guanine in position 527 of 16S rRNA. This chain is Ribosomal RNA small subunit methyltransferase G, found in Burkholderia ambifaria (strain MC40-6).